The primary structure comprises 658 residues: Sodium/nucleoside cotransporter 1 (658 aa).

Topologically, residues 1-75 (MEKASGRKSL…ARTFCQRHAS (75 aa)) are cytoplasmic. A helical transmembrane segment spans residues 76–99 (LFKKILLGLLCLAYAAYFLAACIL). Over 100-104 (DFQRA) the chain is Extracellular. The chain crosses the membrane as a helical span at residues 105–123 (LALFVITCLVILVLLLHFL). Residues 124–142 (KKFLGKKLTRCLKPFKNSQ) lie on the Cytoplasmic side of the membrane. A helical transmembrane segment spans residues 143–162 (LRLWIKRVFAGVSLVGLILW). Residues 163–173 (LALDTAQRPEQ) lie on the Extracellular side of the membrane. The chain crosses the membrane as a helical span at residues 174–190 (LISFAGICMFVLILFAC). The Cytoplasmic segment spans residues 191–196 (SKHHSA). A helical membrane pass occupies residues 197 to 217 (VSWRTVFWGLGLQFVFGLLVI). The Extracellular segment spans residues 218–256 (RTDPGFIAFQWLGDQVQIFLAYTVAGSSFVLGDTLVNDV). A helical membrane pass occupies residues 257–278 (FAFQSLPIIIFFGCVMSILYYL). Over 279-289 (GLVQWVVQKIA) the chain is Cytoplasmic. A helical membrane pass occupies residues 290-313 (WFLQVTMRTTATETLAVAGNIFVG). Residues 314–332 (MTEAPLLIRPYLADLTLSE) lie on the Extracellular side of the membrane. A helical transmembrane segment spans residues 333 to 355 (IHAVMTSGFATISGTVLGAFISF). Residues 356–361 (GIDASS) are Cytoplasmic-facing. A helical membrane pass occupies residues 362-381 (LISASVMGAPCALALSKLVY). Over 382 to 418 (PEEEESKFKSKEGVKLPRGKESNVLEAASNGATDAIA) the chain is Extracellular. The helical transmembrane segment at 419–441 (LVANVAANLVAFLAVLAFINAAL) threads the bilayer. The Cytoplasmic segment spans residues 442–452 (SWLGELVDIQG). A helical transmembrane segment spans residues 453–474 (LTFQVICSYILRPMVYMMGVEW). Topologically, residues 475–529 (TDCPMVAEMVGIKFFTNEFVAYQQLSQYKKKRLSGMEEWIDGQKQWISVRAEVIT) are extracellular. The chain crosses the membrane as a helical span at residues 530–553 (TFSLCGFANLSSIGITLGGLTSMV). The Cytoplasmic segment spans residues 554–564 (PHRKSDLSKVV). A helical transmembrane segment spans residues 565 to 587 (IRALFTGSCVSFISACVAGILYV). Over 588 to 658 (PRGAETDCVS…CGFYNNTVCA (71 aa)) the chain is Extracellular. N653 is a glycosylation site (N-linked (GlcNAc...) asparagine).

Belongs to the concentrative nucleoside transporter (CNT) (TC 2.A.41) family. N-glycosylated. N-glycosylation is required for localization to the plasma membrane and the transporter activity.

The protein localises to the cell membrane. The protein resides in the apical cell membrane. It catalyses the reaction uridine(out) + Na(+)(out) = uridine(in) + Na(+)(in). The catalysed reaction is thymidine(out) + Na(+)(out) = thymidine(in) + Na(+)(in). It carries out the reaction cytidine(out) + Na(+)(out) = cytidine(in) + Na(+)(in). The enzyme catalyses adenosine(out) + Na(+)(out) = adenosine(in) + Na(+)(in). Due to its high apparent affinity but slow transport, adenosine could act as a negative regulator of pyrimidine transport under some conditions. Functionally, sodium and pyrimidine nucleoside symporter of the plasma membrane that imports uridine, thymidine and cytidine into cells by coupling their transport to the transmembrane sodium electrochemical gradient. Also transports adenosine, an atypical substrate transported with high apparent affinity, but low maximum velocity. Therefore, exhibits the transport characteristics of the nucleoside transport system cit or N2 subtype (N2/cit). Involved in renal nucleoside (re)absorption. This is Sodium/nucleoside cotransporter 1 (SLC28A1) from Oryctolagus cuniculus (Rabbit).